The primary structure comprises 390 residues: Tuftelin (390 aa).

2 coiled-coil regions span residues 88-126 (DKMT…KLDR) and 163-352 (PSMS…EKQV). Positions 356-383 (NFSTQARAKTENLGSVRISKPPSPKPMP) are disordered.

This sequence belongs to the tuftelin family. Interacts with TFIP11. May form oligomers. In terms of tissue distribution, ameloblasts, and also non-odontogenic tissues including kidney, lung, liver and testis.

It localises to the secreted. In terms of biological role, involved in the structural organization of the epidermis. Involved in the mineralization and structural organization of enamel. The polypeptide is Tuftelin (Tuft1) (Mus musculus (Mouse)).